Here is a 370-residue protein sequence, read N- to C-terminus: Dual-specificity RNA methyltransferase RlmN (370 aa).

Glutamate 93 functions as the Proton acceptor in the catalytic mechanism. In terms of domain architecture, Radical SAM core spans 99-337 (AEGRGTLCVS…VTTVRKTRGD (239 aa)). Cysteine 106 and cysteine 343 are oxidised to a cystine. The [4Fe-4S] cluster site is built by cysteine 113, cysteine 117, and cysteine 120. Residues 167–168 (GE), serine 199, 221–223 (SLH), and asparagine 300 each bind S-adenosyl-L-methionine. Cysteine 343 acts as the S-methylcysteine intermediate in catalysis.

It belongs to the radical SAM superfamily. RlmN family. The cofactor is [4Fe-4S] cluster.

The protein resides in the cytoplasm. The catalysed reaction is adenosine(2503) in 23S rRNA + 2 reduced [2Fe-2S]-[ferredoxin] + 2 S-adenosyl-L-methionine = 2-methyladenosine(2503) in 23S rRNA + 5'-deoxyadenosine + L-methionine + 2 oxidized [2Fe-2S]-[ferredoxin] + S-adenosyl-L-homocysteine. It catalyses the reaction adenosine(37) in tRNA + 2 reduced [2Fe-2S]-[ferredoxin] + 2 S-adenosyl-L-methionine = 2-methyladenosine(37) in tRNA + 5'-deoxyadenosine + L-methionine + 2 oxidized [2Fe-2S]-[ferredoxin] + S-adenosyl-L-homocysteine. Its function is as follows. Specifically methylates position 2 of adenine 2503 in 23S rRNA and position 2 of adenine 37 in tRNAs. m2A2503 modification seems to play a crucial role in the proofreading step occurring at the peptidyl transferase center and thus would serve to optimize ribosomal fidelity. This is Dual-specificity RNA methyltransferase RlmN from Francisella tularensis subsp. tularensis (strain FSC 198).